The sequence spans 188 residues: Threonylcarbamoyl-AMP synthase (188 aa).

The 186-residue stretch at 3–188 (QLHPSDIKDI…RSGKILRNGQ (186 aa)) folds into the YrdC-like domain.

Belongs to the SUA5 family. TsaC subfamily.

It is found in the cytoplasm. The catalysed reaction is L-threonine + hydrogencarbonate + ATP = L-threonylcarbamoyladenylate + diphosphate + H2O. Its function is as follows. Required for the formation of a threonylcarbamoyl group on adenosine at position 37 (t(6)A37) in tRNAs that read codons beginning with adenine. Catalyzes the conversion of L-threonine, HCO(3)(-)/CO(2) and ATP to give threonylcarbamoyl-AMP (TC-AMP) as the acyladenylate intermediate, with the release of diphosphate. This chain is Threonylcarbamoyl-AMP synthase, found in Shewanella baltica (strain OS155 / ATCC BAA-1091).